The following is a 485-amino-acid chain: Glutamyl-tRNA(Gln) amidotransferase subunit A (485 aa).

Catalysis depends on charge relay system residues lysine 78 and serine 153. The Acyl-ester intermediate role is filled by serine 177.

The protein belongs to the amidase family. GatA subfamily. As to quaternary structure, heterotrimer of A, B and C subunits.

It catalyses the reaction L-glutamyl-tRNA(Gln) + L-glutamine + ATP + H2O = L-glutaminyl-tRNA(Gln) + L-glutamate + ADP + phosphate + H(+). Allows the formation of correctly charged Gln-tRNA(Gln) through the transamidation of misacylated Glu-tRNA(Gln) in organisms which lack glutaminyl-tRNA synthetase. The reaction takes place in the presence of glutamine and ATP through an activated gamma-phospho-Glu-tRNA(Gln). The polypeptide is Glutamyl-tRNA(Gln) amidotransferase subunit A (Desulfatibacillum aliphaticivorans).